A 682-amino-acid polypeptide reads, in one-letter code: Potassium-transporting ATPase ATP-binding subunit (682 aa).

4 consecutive transmembrane segments (helical) span residues 34–54 (PVMF…LAMV), 58–78 (IAGS…TVLF), 219–239 (IALT…TATL), and 254–274 (VLVA…LSAI). Aspartate 307 serves as the catalytic 4-aspartylphosphate intermediate. Residues aspartate 344, glutamate 348, 377-384 (FTAQSRMS), and lysine 395 each bind ATP. Residues aspartate 518 and aspartate 522 each coordinate Mg(2+). The next 3 membrane-spanning stretches (helical) occupy residues 588 to 608 (FAII…LNVM), 616 to 636 (AILS…PLAL), and 662 to 682 (LVVP…LGLA).

It belongs to the cation transport ATPase (P-type) (TC 3.A.3) family. Type IA subfamily. As to quaternary structure, the system is composed of three essential subunits: KdpA, KdpB and KdpC.

Its subcellular location is the cell inner membrane. The enzyme catalyses K(+)(out) + ATP + H2O = K(+)(in) + ADP + phosphate + H(+). In terms of biological role, part of the high-affinity ATP-driven potassium transport (or Kdp) system, which catalyzes the hydrolysis of ATP coupled with the electrogenic transport of potassium into the cytoplasm. This subunit is responsible for energy coupling to the transport system and for the release of the potassium ions to the cytoplasm. In Salmonella paratyphi A (strain ATCC 9150 / SARB42), this protein is Potassium-transporting ATPase ATP-binding subunit.